We begin with the raw amino-acid sequence, 337 residues long: Protein LEG1 homolog (337 aa).

A signal peptide spans 1 to 20 (MAVLASWVWVLAGCFCAAVA). N-linked (GlcNAc...) asparagine glycosylation occurs at Asn-171.

Belongs to the LEG1 family.

It localises to the secreted. Functionally, may be involved in early liver development. In Mus musculus (Mouse), this protein is Protein LEG1 homolog.